The sequence spans 144 residues: Transcriptional regulator SlyA (144 aa).

Positions 2-135 constitute an HTH marR-type domain; it reads ESPLGSDLAR…LITLIAKLEH (134 aa). Positions 49–72 form a DNA-binding region, H-T-H motif; the sequence is QIQLAKAIGIEQPSLVRTLDQLEE.

This sequence belongs to the SlyA family. Homodimer.

Its function is as follows. Transcription regulator that can specifically activate or repress expression of target genes. The polypeptide is Transcriptional regulator SlyA (Shigella boydii serotype 18 (strain CDC 3083-94 / BS512)).